Reading from the N-terminus, the 418-residue chain is Protease LasA (418 aa).

An N-terminal signal peptide occupies residues 1 to 31 (MQHKRSRAMASPRSPFLFVLLALAVGGTANA). Positions 32 to 236 (HDDGLPAFRY…ARQLQAKAAL (205 aa)) are excised as a propeptide. Zn(2+) is bound by residues histidine 259 and aspartate 272. The cysteines at positions 301 and 347 are disulfide-linked. Active-site proton donor/acceptor residues include histidine 317 and histidine 356. Histidine 358 is a Zn(2+) binding site. The cysteines at positions 391 and 406 are disulfide-linked.

It belongs to the peptidase M23A family. It depends on Zn(2+) as a cofactor. Processing of pro-LasA can occur extracellularly and requires elastase (lasB). Secretion and processing may be linked.

The protein localises to the secreted. Involved in proteolysis and elastolysis (degradation of the host protein elastin). Has staphylolytic activity (degrades pentaglycine cross-links in cell wall peptidoglycan), preferring Gly-Gly-|-X substrates where X is Ala or Gly. Enhances the elastolytic but not proteolytic activity of elastase (lasB) and elastolytic activity of other proteases. Degradation of host elastin is likely to contribute to the pathogenicity of P.aeruginosa. While either His-317 or His-356 can abstract a proton in the hydrolysis reaction, the same residue performs both functions in a given catalytic cycle, with the other stabilizing the catalytic intermediate. The sequence is that of Protease LasA (lasA) from Pseudomonas aeruginosa (strain ATCC 15692 / DSM 22644 / CIP 104116 / JCM 14847 / LMG 12228 / 1C / PRS 101 / PAO1).